We begin with the raw amino-acid sequence, 196 residues long: Interleukin-23 subunit alpha (196 aa).

Residues 1-21 form the signal peptide; the sequence is MLDCRAIILLWLLPWATQGLA.

Belongs to the IL-6 superfamily. Heterodimer with IL12B; disulfide-linked. The heterodimer is known as interleukin IL-23. Interacts with IL23R; this interaction enables recruitment of IL12RB1.

The protein localises to the secreted. Associates with IL12B to form the pro-inflammatory cytokine IL-23 that plays different roles in innate and adaptive immunity. Released by antigen-presenting cells such as dendritic cells or macrophages, binds to a heterodimeric receptor complex composed of IL12RB1 and IL23R to activate JAK2 and TYK2 which then phosphorylate the receptor to form a docking site leading to the phosphorylation of STAT3 and STAT4. This process leads to activation of several pathways including p38 MAPK or NF-kappa-B and promotes the production of pro-inflammatory cytokines such as interleukin-17A/IL17A. In turn, participates in the early and effective intracellular bacterial clearance. Promotes the expansion and survival of T-helper 17 cells, a CD4-positive helper T-cell subset that produces IL-17, as well as other IL-17-producing cells. The sequence is that of Interleukin-23 subunit alpha (Il23a) from Rattus norvegicus (Rat).